Here is a 217-residue protein sequence, read N- to C-terminus: Small ribosomal subunit protein uS3 (217 aa).

A KH type-2 domain is found at 38 to 106 (IRKFIQKELA…QVHINIIEIK (69 aa)).

Belongs to the universal ribosomal protein uS3 family. In terms of assembly, part of the 30S ribosomal subunit. Forms a tight complex with proteins S10 and S14.

Its function is as follows. Binds the lower part of the 30S subunit head. Binds mRNA in the 70S ribosome, positioning it for translation. In Streptococcus uberis (strain ATCC BAA-854 / 0140J), this protein is Small ribosomal subunit protein uS3.